Consider the following 104-residue polypeptide: uncharacterized protein (104 aa).

This is an uncharacterized protein from Saccharomyces cerevisiae (strain ATCC 204508 / S288c) (Baker's yeast).